The following is a 544-amino-acid chain: Calcium-dependent protein kinase 6 (544 aa).

The segment at 1 to 47 is disordered; that stretch reads MGNSCRGSFKDKIYEGNHSRPEENSKSTTTTVSSVHSPTTDQDFSKQ. The N-myristoyl glycine moiety is linked to residue Gly2. The span at 8-25 shows a compositional bias: basic and acidic residues; the sequence is SFKDKIYEGNHSRPEENS. Low complexity predominate over residues 26 to 40; that stretch reads KSTTTTVSSVHSPTT. The region spanning 85 to 343 is the Protein kinase domain; sequence YTLSRKLGQG…AHEVLRHPWI (259 aa). Residues 91–99 and Lys114 each bind ATP; that span reads LGQGQFGTT. Asp209 functions as the Proton acceptor in the catalytic mechanism. A Phosphoserine modification is found at Ser249. The segment at 349–379 is autoinhibitory domain; it reads APDRALDPAVLSRLKQFSAMNKLKKMALKVI. 4 consecutive EF-hand domains span residues 386–421, 422–457, 458–493, and 497–527; these read EEIA…YGST, LKDT…LNKL, EREE…HGMT, and LEDI…GNAG. 19 residues coordinate Ca(2+): Asp399, Asp401, Ser403, Glu410, Asp435, Asp437, Ser439, Thr441, Glu446, Asp471, Asp473, Ser475, Tyr477, Glu482, Asp505, Asp507, Asp509, Arg511, and Glu516.

It belongs to the protein kinase superfamily. Ser/Thr protein kinase family. CDPK subfamily. Interacts with SLAC1. Interacts with FD. As to expression, expressed in both guard cells and mesophyll cells. Expressed in the shoot apical meristem.

It localises to the cell membrane. The protein resides in the nucleus. The enzyme catalyses L-seryl-[protein] + ATP = O-phospho-L-seryl-[protein] + ADP + H(+). It catalyses the reaction L-threonyl-[protein] + ATP = O-phospho-L-threonyl-[protein] + ADP + H(+). With respect to regulation, activated by calcium. Autophosphorylation may play an important role in the regulation of the kinase activity. Its function is as follows. May play a role in signal transduction pathways that involve calcium as a second messenger. Functions in abscisic acid (ABA) regulation of guard cell S-type anion- and Ca(2+)-permeable channels and stomatal closure. Phosphorylates FD. This is Calcium-dependent protein kinase 6 (CPK6) from Arabidopsis thaliana (Mouse-ear cress).